Reading from the N-terminus, the 843-residue chain is Leucine--tRNA ligase (843 aa).

The 'HIGH' region motif lies at 61–71 (PYPSGDLHMGH). The 'KMSKS' region motif lies at 606–610 (AMSKS). K609 is an ATP binding site.

Belongs to the class-I aminoacyl-tRNA synthetase family.

It localises to the cytoplasm. It catalyses the reaction tRNA(Leu) + L-leucine + ATP = L-leucyl-tRNA(Leu) + AMP + diphosphate. In Arthrobacter sp. (strain FB24), this protein is Leucine--tRNA ligase.